The primary structure comprises 701 residues: Phytyl ester synthase 2, chloroplastic (701 aa).

Residues 1–65 (MAVTVLPSVS…KNNDENRATV (65 aa)) constitute a chloroplast transit peptide. Positions 37–64 (SVTSTSSPPTPSSGVQRRRKNNDENRAT) are disordered.

Belongs to the diacylglycerol acyltransferase family.

Its subcellular location is the plastid. It localises to the chloroplast. The protein resides in the plastoglobule. The catalysed reaction is a 1,2-diacyl-3-O-(beta-D-galactosyl)-sn-glycerol + a 1,2-diacylglycerol = an acyl-3-O-(beta-D-galactosyl)-sn-glycerol + a triacylglycerol. It carries out the reaction a 1,2-diacylglycerol + a fatty acyl-CoA = a triacylglycerol + CoA. The enzyme catalyses a fatty acyl-[ACP] + a 1,2-diacylglycerol = a triacylglycerol + holo-[ACP]. It catalyses the reaction phytol + a fatty acyl-CoA = a fatty acid phytyl ester + CoA. The catalysed reaction is phytol + tetradecanoyl-CoA = tetradecanoate phytyl ester + CoA. It carries out the reaction a 1,3-diacylglycerol + a fatty acyl-CoA = a triacylglycerol + CoA. The enzyme catalyses 1,2-dihexanoylglycerol + tetradecanoyl-CoA = 1,2-dihexanoyl-3-tetradecanoylglycerol + CoA. It catalyses the reaction 1,2-dihexanoylglycerol + hexadecanoyl-CoA = 1,2-dihexanoyl-3-hexadecanoylglycerol + CoA. The catalysed reaction is 1,2-dihexanoylglycerol + octadecanoyl-CoA = 1,2-dihexanoyl-3-octadecanoylglycerol + CoA. It carries out the reaction (7Z,10Z,13Z)-hexadecatrienoyl-CoA + 1,2-dihexanoylglycerol = 1,2-dihexanoyl-3-(7Z,10Z,13Z-hexadecatrienoyl)-glycerol + CoA. The enzyme catalyses 1,2-dihexanoylglycerol + (9Z)-octadecenoyl-CoA = 1,2-dihexanoyl-3-(9Z-octadecenoyl)-glycerol + CoA. It catalyses the reaction 1,2-dihexanoylglycerol + (9Z,12Z,15Z)-octadecatrienoyl-CoA = 1,2-dihexanoyl-3-(9Z,12Z,15Z-octadecatrienoyl)-glycerol + CoA. The catalysed reaction is phytol + decanoyl-CoA = decanoate phytyl ester + CoA. It carries out the reaction (7Z,10Z,13Z)-hexadecatrienoyl-CoA + phytol = (7Z,10Z,13Z)-hexadecatrienoate phytyl ester + CoA. The enzyme catalyses phytol + dodecanoyl-CoA = dodecanoate phytyl ester + CoA. Its function is as follows. Acyltransferase involved in fatty acid phytyl ester synthesis in chloroplasts, a process required for the maintenance of the photosynthetic membrane integrity during abiotic stress and senescence. Exhibits phytyl ester synthesis and diacylglycerol acyltransferase activities with broad substrate specificities, and can employ acyl-CoAs, acyl carrier proteins, and galactolipids as acyl donors. The chain is Phytyl ester synthase 2, chloroplastic from Arabidopsis thaliana (Mouse-ear cress).